Consider the following 347-residue polypeptide: 4-hydroxy-2-oxovalerate aldolase 1 (347 aa).

In terms of domain architecture, Pyruvate carboxyltransferase spans 13-265 (IRVTDTSLRD…KTGIDFFAIA (253 aa)). 21 to 22 (RD) lines the substrate pocket. A Mn(2+)-binding site is contributed by aspartate 22. Histidine 25 functions as the Proton acceptor in the catalytic mechanism. Residues serine 175 and histidine 204 each contribute to the substrate site. Positions 204 and 206 each coordinate Mn(2+). Residue tyrosine 295 coordinates substrate.

The protein belongs to the 4-hydroxy-2-oxovalerate aldolase family.

It catalyses the reaction (S)-4-hydroxy-2-oxopentanoate = acetaldehyde + pyruvate. The protein is 4-hydroxy-2-oxovalerate aldolase 1 of Rhodococcus erythropolis (strain PR4 / NBRC 100887).